Reading from the N-terminus, the 211-residue chain is Uridine kinase (211 aa).

G12–T19 lines the ATP pocket.

Belongs to the uridine kinase family.

Its subcellular location is the cytoplasm. It carries out the reaction uridine + ATP = UMP + ADP + H(+). It catalyses the reaction cytidine + ATP = CMP + ADP + H(+). It participates in pyrimidine metabolism; CTP biosynthesis via salvage pathway; CTP from cytidine: step 1/3. The protein operates within pyrimidine metabolism; UMP biosynthesis via salvage pathway; UMP from uridine: step 1/1. The polypeptide is Uridine kinase (Streptococcus thermophilus (strain CNRZ 1066)).